Reading from the N-terminus, the 33-residue chain is MSDINATRLPIWGIGCDPCVGDDVTAVLTRGEA.

Positions Met-1–Pro-10 are excised as a propeptide. A cross-link (cyclopeptide (Ile-Pro)) is located at residues Ile-11–Pro-18. The 2'-cysteinyl-6'-hydroxytryptophan sulfoxide (Trp-Cys) cross-link spans Trp-12–Cys-16. A propeptide spanning residues Cys-19–Ala-33 is cleaved from the precursor.

The protein belongs to the MSDIN fungal toxin family. In terms of processing, processed by the macrocyclase-peptidase enzyme POPB to yield a toxic cyclic decapeptide. POPB first removes 10 residues from the N-terminus. Conformational trapping of the remaining peptide forces the enzyme to release this intermediate rather than proceed to macrocyclization. The enzyme rebinds the remaining peptide in a different conformation and catalyzes macrocyclization of the N-terminal 8 residues.

Toxin belonging to the bicyclic octapeptides amatoxins that acts by binding non-competitively to RNA polymerase II and greatly slowing the elongation of transcripts from target promoters. The protein is Beta-amanitin proprotein of Amanita pallidorosea.